A 736-amino-acid polypeptide reads, in one-letter code: MKEAKIENIDFGSALSERYLAYALSTIMSRSLPDVRDGLKPVHRRLLYAMLQLRLEPNSGYKKCARVVGDVIGKYHPHGDVAVYDTLVRLAQHFSLRYPLIDGQGNFGSIDGDNAAAMRYTESRMTEICTLLMEDIDKDTVDFRSTYDDSDLEPVIMPASFPNLLANGSEGIAVGMATNIPPHNLHELCDALMHLIDHPKAEISDIMNFIKGPDFPTGGIIIDKSDVITSAYMTGRGSFRVRARWEKEELNYGVYQIVVTEIPYQVQKSKLIEQIAILLKDKKIPLVSNIRDESTDIIRLVIEPRDRSCDPQIVMESLFKLTNLESRIQLNMNVIGSNNVPKVMNILEVLQEFLSHRQNIITRRSTYLLNKIKHRLEILEGLRIAYLNLDEIIKIIREEDEPKAIMMQRFQLTEIQVEAILNTRLRSLRKLEEQEIITEHSNLQKQQAILEEILNNPKELWKVVKKEIKAVQAKFGLNTTIGARRTSFEQVTLTNQVVDITAFITKEPITIICSKMGWVRSLKGHNNDLSSIKYKEGDAEKFILEAYTTDKILIISSEGRFFTLLADNISKGKGTGESIKLLVDIGNNDITEILVYKPDHLLLLASSIGKGFVVNSNEVMAQTKSGKQIMNVPDGHTCIACLPVNGDSVACIGESRKLLVFNIDEIPEMKKGQGVTLQKFKNAKLLDIKIFNREDGLSWNSGGKVKLEKNIIAFLGKRGSTGKLPPMGFPKNNRFS.

Residues 32–496 enclose the Topo IIA-type catalytic domain; sequence LPDVRDGLKP…SFEQVTLTNQ (465 aa). Y120 (O-(5'-phospho-DNA)-tyrosine intermediate) is an active-site residue.

It belongs to the type II topoisomerase GyrA/ParC subunit family. ParC type 1 subfamily. In terms of assembly, heterotetramer composed of ParC and ParE.

The protein localises to the cell membrane. The catalysed reaction is ATP-dependent breakage, passage and rejoining of double-stranded DNA.. Functionally, topoisomerase IV is essential for chromosome segregation. It relaxes supercoiled DNA. Performs the decatenation events required during the replication of a circular DNA molecule. This chain is DNA topoisomerase 4 subunit A, found in Rickettsia bellii (strain RML369-C).